Here is a 495-residue protein sequence, read N- to C-terminus: Cytochrome P450 monooxygenase aneF (495 aa).

Residues 1–21 (MIAGLVLVVLLTKYLQRVFLH) form a helical membrane-spanning segment. A glycan (N-linked (GlcNAc...) asparagine) is linked at Asn-47. Cys-437 lines the heme pocket.

Belongs to the cytochrome P450 family. Requires heme as cofactor.

It is found in the membrane. It carries out the reaction dauca-4,7-diene + 3 reduced [NADPH--hemoprotein reductase] + 3 O2 = asperaculane D + 3 oxidized [NADPH--hemoprotein reductase] + 4 H2O + 4 H(+). Its pathway is secondary metabolite biosynthesis. Its function is as follows. Cytochrome P450 monooxygenase; part of the gene cluster that mediates the biosynthesis of aculenes, a unique type of norsesquiterpenes that contain a nordaucane skeleton linked to an L-proline moiety and are of mixed biosynthetic origin. The pathway begins with the synthesis of dauca-4,7-diene by the terpene cyclase aneC using farnesyl pyrophosphate (FPP) as substrate. The cytochrome P450 monooxygenase aneF then performs the initial oxidation at C-12 of dauca-4,7-diene to yield asperaculane D. Asperaculane D is substrate of the cytochrome P450 monooxygenase aneD for C-10 hydroxylation to yield asperaculane E. The cytochrome P450 monooxygenase aneG then converts asperaculane E into aculene D via C-2 oxidation. The monomodular nonribosomal peptide synthtase aneB adenylates L-proline and the thiohydrolase aneE transfers this activated L-proline derivative to aculenes D and C to produce respectively aculenes B and A. The dioxygenase aneA converts aculene D into aculene C, and aculene B into aculene A by introducing the 5,6-alkene moiety. Asperculanes A, B, C and F, as well as 14-prolyl asperculane C, might be shunt products of the pathway. This Aspergillus aculeatus (strain ATCC 16872 / CBS 172.66 / WB 5094) protein is Cytochrome P450 monooxygenase aneF.